A 427-amino-acid chain; its full sequence is 3-phosphoshikimate 1-carboxyvinyltransferase (427 aa).

3-phosphoshikimate-binding residues include Lys-20, Ser-21, and Arg-25. Phosphoenolpyruvate is bound at residue Lys-20. The phosphoenolpyruvate site is built by Gly-92 and Arg-120. 3-phosphoshikimate is bound by residues Ser-166, Gln-168, Asp-312, and Lys-339. Gln-168 lines the phosphoenolpyruvate pocket. Asp-312 acts as the Proton acceptor in catalysis. The phosphoenolpyruvate site is built by Arg-343 and Arg-385.

The protein belongs to the EPSP synthase family. In terms of assembly, monomer.

The protein localises to the cytoplasm. The enzyme catalyses 3-phosphoshikimate + phosphoenolpyruvate = 5-O-(1-carboxyvinyl)-3-phosphoshikimate + phosphate. It functions in the pathway metabolic intermediate biosynthesis; chorismate biosynthesis; chorismate from D-erythrose 4-phosphate and phosphoenolpyruvate: step 6/7. Its function is as follows. Catalyzes the transfer of the enolpyruvyl moiety of phosphoenolpyruvate (PEP) to the 5-hydroxyl of shikimate-3-phosphate (S3P) to produce enolpyruvyl shikimate-3-phosphate and inorganic phosphate. The polypeptide is 3-phosphoshikimate 1-carboxyvinyltransferase (Streptococcus equi subsp. zooepidemicus (strain H70)).